The sequence spans 1203 residues: MIDVNNFEYMKIGLASPDKIRSWSYGEVKKPETINYRTLKPEKDGLFCERIFGPQKDWECHCGKYKRVRYKGVVCDRCGVEVTRAKVRRERMGHIELAAPVSHIWYFKGIPSRMGLVLDMSPRALEEVIYFASYVVTESGDTPLDKKQLLSEKEYRAYRDRYGSTFQAAMGAEAIKKLLQDIDLDKEVDFLKEELKTAQGQRRTRAIKRLEVLEAFRNSGNEPSWMILDVLPVIPPELRPMVQLDGGRFATSDLNDLYRRVINRNNRLKRLLDLGAPSIIVQNEKRMLQEAVDALIDNGRRGRPVTGPGNRPLKSLSHMLKGKQGRFRQNLLGKRVDYSGRSVIVVGPNLKMYQCGLPKEMALELFKPFVMKELVEKGLAHNIKSAKRKIERVQPEVWDVLESVIKEHPVLLNRAPTLHRLGIQAFEPTLVEGRAIRLHPLVCTAYNADFDGDQMAVHVPLSSEAQAEARLLMLAAQNILNPKDGKPVVTPSQDMVLGNYYLTLEREGAIGEGMVFKDANEALLAYQNGYVHLHTRVAVAASAVNNVTFTEEQKNMLLLTTVGKLIFNEILPESFPYINEPTNSNLEKETPAKYFVEKGANIKEIIASREEVAPFSKKILGNIIAEVFKRFKITETSRMLDRMKNLGFKYSTKAGITVGVSDILVLGEKDEILHEAQAKVDNVIKQFRRGLITEEERYDRVISIWSNAKDVIQGKLMKSLNKRNPIFMMSDSGARGNASNFTQLAGMRGLMANPSGRIIELPIKSSFREGLTVLEYFISTHGARKGLADTALKTADSGYLTRRLVDVAQDVIVREDDCGTDRGLLIGAIKEGNEVIESLYDRLVGRFARKTVKHPETGEVLVAENQLITEDIAHIVENSGVETVNIRSAFTCNTRHGVCKKCYGRNLATGTDVEVGEAVGIIAAQSIGEPGTQLTMRTFHTGGVAGDDITQGLPRIQEIFEARNPKGQAVISEIDGVIAAINDVKDRQEVVVQGEVEARTYAIPYGARLKVIPGQKISHGKELTEGSIDPKELLKVTDITAVQEYLLREVQKVYRMQGVEIGDKHVEVMVRQMLRKVRVSDAGETDVLPGTLLDIHQFTDANAKVLLQGKQPATARPVLLGITKASLETDSFLSAASFQETTRVLTDAAIKGKRDELLGLKENVIIGKLVPAGTGMNRYRKVDLVKTTQDDMNVENDEVYVEQ.

Positions 60, 62, 75, and 78 each coordinate Zn(2+). Mg(2+)-binding residues include Asp449, Asp451, and Asp453. 4 residues coordinate Zn(2+): Cys818, Cys892, Cys899, and Cys902.

It belongs to the RNA polymerase beta' chain family. As to quaternary structure, the RNAP catalytic core consists of 2 alpha, 1 beta, 1 beta' and 1 omega subunit. When a sigma factor is associated with the core the holoenzyme is formed, which can initiate transcription. Mg(2+) serves as cofactor. It depends on Zn(2+) as a cofactor.

The catalysed reaction is RNA(n) + a ribonucleoside 5'-triphosphate = RNA(n+1) + diphosphate. Its function is as follows. DNA-dependent RNA polymerase catalyzes the transcription of DNA into RNA using the four ribonucleoside triphosphates as substrates. This chain is DNA-directed RNA polymerase subunit beta', found in Bacillus anthracis.